The following is a 77-amino-acid chain: MSGLGIMLLTLLLLVFMETSHQDAGEKQATQRDAINVRRRRSLTRRVTEECEENCEEEEKHCCNTNNGPSCAPQCFG.

Residues 1–22 (MSGLGIMLLTLLLLVFMETSHQ) form the signal peptide. Residues 23–44 (DAGEKQATQRDAINVRRRRSLT) constitute a propeptide that is removed on maturation. Intrachain disulfides connect cysteine 51/cysteine 63, cysteine 55/cysteine 71, and cysteine 62/cysteine 75. Phenylalanine 76 carries the phenylalanine amide modification.

This sequence belongs to the conotoxin O3 superfamily. Expressed by the venom duct.

The protein resides in the secreted. The sequence is that of Conotoxin ArMSGL-0143 from Conus arenatus (Sand-dusted cone).